A 256-amino-acid polypeptide reads, in one-letter code: Small ribosomal subunit protein eS1 (256 aa).

A2 carries the post-translational modification N-acetylalanine; partial.

It belongs to the eukaryotic ribosomal protein eS1 family. Component of the small ribosomal subunit. Mature ribosomes consist of a small (40S) and a large (60S) subunit. The 40S subunit contains about 33 different proteins and 1 molecule of RNA (18S). The 60S subunit contains about 49 different proteins and 3 molecules of RNA (25S, 5.8S and 5S).

It is found in the cytoplasm. The sequence is that of Small ribosomal subunit protein eS1 (rps1) from Botryotinia fuckeliana (strain B05.10) (Noble rot fungus).